The following is a 143-amino-acid chain: Snake venom vascular endothelial growth factor toxin (143 aa).

A signal peptide spans 1 to 24; that stretch reads MAVYLLAVAILFCIQGWPSGTVQG. Residue Glu25 is modified to Pyrrolidone carboxylic acid (Glu). 3 cysteine pairs are disulfide-bonded: Cys38–Cys80, Cys69–Cys115, and Cys73–Cys117. The interval 117 to 143 is disordered; sequence CRPRSPGDVNDGRNPKEGEPRARFPFV.

This sequence belongs to the PDGF/VEGF growth factor family. Snake venom VEGF subfamily. In terms of assembly, homodimer; disulfide-linked. Interacts with VEGF receptor-1 (FLT1) with a high affinity, whereas it binds to VEGF receptor-2 (KDR) with a low affinity. Does not bind to VEGFR-3/FLT4 and neuropilin-1 (NRP1). As to expression, expressed by the venom gland.

The protein resides in the secreted. Its function is as follows. Snake venom VEGFs may contribute to venom dispersion and prey subjugation by inducing vascular permeability and hypotension. This protein activates the vascular endothelial growth factor receptor-1 (VEGFR-1/FLT1), and consequently promotes the proliferation and tissue factor production of endothelial cells, the neovascularization in the chicken chorioallantoic membrane, and increases vascular permeability. Also stimulates tissue-factor production and human monocyte chemotaxis. The protein is Snake venom vascular endothelial growth factor toxin of Protobothrops mucrosquamatus (Taiwan habu).